A 473-amino-acid chain; its full sequence is Ras-GEF domain-containing family member 1B (473 aa).

Residues 34 to 164 form the N-terminal Ras-GEF domain; sequence HDNNLLSGSL…QMMQCLIRKL (131 aa). The region spanning 204–452 is the Ras-GEF domain; the sequence is NDPYTLAQQL…LYLASYESEG (249 aa).

As to quaternary structure, interacts with Ras family proteins. Interacts with CCDC124 during cytokinesis.

It is found in the early endosome. Its subcellular location is the late endosome. It localises to the midbody. Functionally, guanine nucleotide exchange factor (GEF) with specificity for RAP2A, it doesn't seems to activate other Ras family proteins (in vitro). The sequence is that of Ras-GEF domain-containing family member 1B (RASGEF1B) from Homo sapiens (Human).